We begin with the raw amino-acid sequence, 68 residues long: Conotoxin Cal14.13b (68 aa).

An N-terminal signal peptide occupies residues 1–20; it reads MKLCVVIVLLMLAMPFNGGE. Residues 21 to 68 constitute a propeptide that is removed on maturation; the sequence is ASRFFNQHARSQRSGMKTRGIWCDPPCPEGETCRGGECSDEFNGDMGR. The residue at position 66 (methionine 66) is a Methionine amide.

Contains 2 disulfide bonds. Expressed by the venom duct.

Its subcellular location is the secreted. Functionally, probable neurotoxin with unknown target. Possibly targets ion channels. The sequence is that of Conotoxin Cal14.13b from Californiconus californicus (California cone).